A 46-amino-acid polypeptide reads, in one-letter code: Large ribosomal subunit protein bL34c (46 aa).

This sequence belongs to the bacterial ribosomal protein bL34 family.

It localises to the plastid. It is found in the chloroplast. The protein is Large ribosomal subunit protein bL34c (rpl34) of Guillardia theta (Cryptophyte).